Here is a 555-residue protein sequence, read N- to C-terminus: Cinnamate beta-D-glucosyltransferase (555 aa).

The active-site Proton acceptor is the His19. His19 lines the an anthocyanidin pocket. Residues Gln344, His359, Trp362, Asn363, Ser364, and Glu367 each coordinate UDP-alpha-D-glucose. Gly382 is an an anthocyanidin binding site. Residues Asp383 and Gln384 each coordinate UDP-alpha-D-glucose.

It belongs to the UDP-glycosyltransferase family. Highest expression detected in fruit, with lower levels detected in flower and petiole. Barely detectable in leaf and root.

It carries out the reaction (E)-cinnamate + UDP-alpha-D-glucose = 1-O-(trans-cinnamoyl)-beta-D-glucose + UDP. Functionally, broad spectrum multifunctional glucosyltransferase. Catalyzes the formation of cinnamic acid and p-coumaric acid glucose esters during fruit ripening. Accepted substrates range from derivatives of cinnamic acid and benzoic acid to heterocyclic and aliphatic compounds, resulting in the formation of O- and S-glucose esters and O-glucosides. May also be involved in detoxification of xenobiotics. This is Cinnamate beta-D-glucosyltransferase from Fragaria ananassa (Strawberry).